A 62-amino-acid chain; its full sequence is Inner membrane protein p12 (62 aa).

A helical membrane pass occupies residues 16–36; sequence LLIVAIIVVIMAIMLYYFWWM.

The protein belongs to the asfivirus inner membrane protein p12 family. In terms of assembly, homomultimer; disulfide-linked. Not glycosylated.

It localises to the virion membrane. The protein is Inner membrane protein p12 of African swine fever virus (isolate Tick/Malawi/Lil 20-1/1983) (ASFV).